We begin with the raw amino-acid sequence, 482 residues long: Bifunctional protein HldE (482 aa).

Residues 1–322 (MFGLESKSPK…QYIHTQPSNL (322 aa)) form a ribokinase region. 198 to 201 (NKKE) contributes to the ATP binding site. The active site involves D267. The cytidylyltransferase stretch occupies residues 350 to 482 (FTNGCFDILH…IQRSKICKHS (133 aa)).

The protein in the N-terminal section; belongs to the carbohydrate kinase PfkB family. This sequence in the C-terminal section; belongs to the cytidylyltransferase family. In terms of assembly, homodimer.

It carries out the reaction D-glycero-beta-D-manno-heptose 7-phosphate + ATP = D-glycero-beta-D-manno-heptose 1,7-bisphosphate + ADP + H(+). The enzyme catalyses D-glycero-beta-D-manno-heptose 1-phosphate + ATP + H(+) = ADP-D-glycero-beta-D-manno-heptose + diphosphate. It functions in the pathway nucleotide-sugar biosynthesis; ADP-L-glycero-beta-D-manno-heptose biosynthesis; ADP-L-glycero-beta-D-manno-heptose from D-glycero-beta-D-manno-heptose 7-phosphate: step 1/4. It participates in nucleotide-sugar biosynthesis; ADP-L-glycero-beta-D-manno-heptose biosynthesis; ADP-L-glycero-beta-D-manno-heptose from D-glycero-beta-D-manno-heptose 7-phosphate: step 3/4. Its pathway is bacterial outer membrane biogenesis; LPS core biosynthesis. Functionally, catalyzes the phosphorylation of D-glycero-D-manno-heptose 7-phosphate at the C-1 position to selectively form D-glycero-beta-D-manno-heptose-1,7-bisphosphate. Its function is as follows. Catalyzes the ADP transfer from ATP to D-glycero-beta-D-manno-heptose 1-phosphate, yielding ADP-D-glycero-beta-D-manno-heptose. This chain is Bifunctional protein HldE, found in Helicobacter hepaticus (strain ATCC 51449 / 3B1).